We begin with the raw amino-acid sequence, 246 residues long: Probable transcriptional regulatory protein GWCH70_2524 (246 aa).

It belongs to the TACO1 family.

It is found in the cytoplasm. This Geobacillus sp. (strain WCH70) protein is Probable transcriptional regulatory protein GWCH70_2524.